A 277-amino-acid polypeptide reads, in one-letter code: Ribosomal RNA small subunit methyltransferase A (277 aa).

N27, L29, G54, E75, D95, and N118 together coordinate S-adenosyl-L-methionine.

It belongs to the class I-like SAM-binding methyltransferase superfamily. rRNA adenine N(6)-methyltransferase family. RsmA subfamily.

The protein resides in the cytoplasm. The catalysed reaction is adenosine(1518)/adenosine(1519) in 16S rRNA + 4 S-adenosyl-L-methionine = N(6)-dimethyladenosine(1518)/N(6)-dimethyladenosine(1519) in 16S rRNA + 4 S-adenosyl-L-homocysteine + 4 H(+). In terms of biological role, specifically dimethylates two adjacent adenosines (A1518 and A1519) in the loop of a conserved hairpin near the 3'-end of 16S rRNA in the 30S particle. May play a critical role in biogenesis of 30S subunits. This Chlamydia muridarum (strain MoPn / Nigg) protein is Ribosomal RNA small subunit methyltransferase A.